An 83-amino-acid polypeptide reads, in one-letter code: Beta-toxin Ct7 (83 aa).

An N-terminal signal peptide occupies residues 1–18; the sequence is MKVLILIIASVLLIGVEC. In terms of domain architecture, LCN-type CS-alpha/beta spans 19–81; it reads KDGYPMNSEG…VWDSATNKCG (63 aa). Cystine bridges form between cysteine 29–cysteine 80, cysteine 33–cysteine 54, cysteine 40–cysteine 61, and cysteine 44–cysteine 63. Glycine 81 is modified (glycine amide). Residue glycine 82 is a propeptide.

The protein belongs to the long (4 C-C) scorpion toxin superfamily. Sodium channel inhibitor family. Beta subfamily. Expressed by the venom gland.

The protein resides in the secreted. Functionally, beta toxins bind voltage-independently at site-4 of sodium channels (Nav) and shift the voltage of activation toward more negative potentials thereby affecting sodium channel activation and promoting spontaneous and repetitive firing. Is possibly toxic to mice, freshwater shrimp and crickets. The sequence is that of Beta-toxin Ct7 from Centruroides tecomanus (Scorpion).